Reading from the N-terminus, the 85-residue chain is Large ribosomal subunit protein bL31B (85 aa).

Belongs to the bacterial ribosomal protein bL31 family. Type B subfamily. As to quaternary structure, part of the 50S ribosomal subunit.

The polypeptide is Large ribosomal subunit protein bL31B (Serratia proteamaculans (strain 568)).